Here is a 142-residue protein sequence, read N- to C-terminus: Hemoglobin subunit alpha-B (142 aa).

The region spanning 2–142 is the Globin domain; the sequence is PFSASDRHDI…VSETLYSKYR (141 aa). Q59 serves as a coordination point for O2. Heme b is bound at residue H88.

Belongs to the globin family. In terms of assembly, heterotetramer of either two alpha-B chains or two alpha-C chains and two beta chains. The two major hemoglobins, B and C, associate upon deoxygenation to form a trimer of tetramers, BC2, that has a much lower affinity for oxygen than either component alone. As to expression, red blood cells.

Its function is as follows. The alpha-B chain is a component of adult hemoglobin B. This is Hemoglobin subunit alpha-B from Aquarana catesbeiana (American bullfrog).